Consider the following 539-residue polypeptide: GMP synthase [glutamine-hydrolyzing] (539 aa).

The 200-residue stretch at 4-203 (KILILDFGSQ…VHDICGCKSD (200 aa)) folds into the Glutamine amidotransferase type-1 domain. Cys-82 serves as the catalytic Nucleophile. Residues His-177 and Glu-179 contribute to the active site. The GMPS ATP-PPase domain occupies 204-395 (WNMPDYIAEA…LGLPHDMVYR (192 aa)). Position 231–237 (231–237 (SGGVDSS)) interacts with ATP.

In terms of assembly, homodimer.

The enzyme catalyses XMP + L-glutamine + ATP + H2O = GMP + L-glutamate + AMP + diphosphate + 2 H(+). The protein operates within purine metabolism; GMP biosynthesis; GMP from XMP (L-Gln route): step 1/1. Its function is as follows. Catalyzes the synthesis of GMP from XMP. The sequence is that of GMP synthase [glutamine-hydrolyzing] from Herminiimonas arsenicoxydans.